Reading from the N-terminus, the 316-residue chain is Probable 5-dehydro-4-deoxyglucarate dehydratase (316 aa).

The protein belongs to the DapA family.

It carries out the reaction 5-dehydro-4-deoxy-D-glucarate + H(+) = 2,5-dioxopentanoate + CO2 + H2O. It functions in the pathway carbohydrate acid metabolism; D-glucarate degradation; 2,5-dioxopentanoate from D-glucarate: step 2/2. This Corynebacterium glutamicum (strain ATCC 13032 / DSM 20300 / JCM 1318 / BCRC 11384 / CCUG 27702 / LMG 3730 / NBRC 12168 / NCIMB 10025 / NRRL B-2784 / 534) protein is Probable 5-dehydro-4-deoxyglucarate dehydratase.